Consider the following 147-residue polypeptide: F420H(2)-dependent reductase Rv1155 (147 aa).

Residues Gln-32, Gln-37, Ser-50, 56–60 (AKTRN), 77–79 (WSY), and His-138 each bind coenzyme F420-(gamma-Glu)n.

It belongs to the F420H(2)-dependent biliverdin reductase family. Homodimer.

Functionally, F420H(2)-dependent reductase able to catalyze the reduction of biliverdin-IXalpha to bilirubin-IXalpha in vitro. However, kinetic parameters show that it is less efficient than the biliverdin reductase Rv2074 and suggest biliverdin-IXalpha is unlikely to be the native substrate of Rv1155, which probably catalyzes the reduction of an alternative molecule in vivo. Binds coenzyme F420, but does not bind FMN or other flavins. Cannot use pyridoxine 5'-phosphate, pyridoxamine 5'-phosphate, pyridoxal 5'-phosphate (PLP), the anti-tuberculosis drug PA-824 or aflatoxin analogs as substrates. The chain is F420H(2)-dependent reductase Rv1155 from Mycobacterium tuberculosis (strain ATCC 25618 / H37Rv).